The following is a 218-amino-acid chain: Mitochondrial fission factor (218 aa).

The Cytoplasmic segment spans residues 1–198 (MAEISRIQYE…ENKERAKREM (198 aa)). Thr-89 bears the Phosphothreonine mark. Phosphoserine is present on residues Ser-129, Ser-131, Ser-146, and Ser-171. Residues 167–198 (VDAASLRRQIIKLNRRLQLLEEENKERAKREM) are a coiled coil. A helical; Anchor for type IV membrane protein transmembrane segment spans residues 199–216 (VMYSITVAFWLLNSWLWF). The Mitochondrial intermembrane segment spans residues 217–218 (RR).

The protein belongs to the Tango11 family. In terms of assembly, homodimer. Interacts with DNM1L. Interacts with C11orf65/MFI; the interaction inhibits MFF interaction with DNM1L.

The protein localises to the mitochondrion outer membrane. Its subcellular location is the peroxisome. The protein resides in the cytoplasmic vesicle. It localises to the secretory vesicle. It is found in the synaptic vesicle. Functionally, plays a role in mitochondrial and peroxisomal fission. Promotes the recruitment and association of the fission mediator dynamin-related protein 1 (DNM1L) to the mitochondrial surface. May be involved in regulation of synaptic vesicle membrane dynamics by recruitment of DNM1L to clathrin-containing vesicles. This chain is Mitochondrial fission factor (MFF), found in Bos taurus (Bovine).